We begin with the raw amino-acid sequence, 189 residues long: UPF0301 protein A1E_00140 (189 aa).

Belongs to the UPF0301 (AlgH) family.

The sequence is that of UPF0301 protein A1E_00140 from Rickettsia canadensis (strain McKiel).